The following is a 334-amino-acid chain: N-acetyl-S-alkylcysteine monooxygenase (334 aa).

The protein to bacterial alkanal monooxygenase alpha and beta chains.

It catalyses the reaction N-acetyl-S-benzyl-L-cysteine + FMNH2 + O2 = (R)-N-acetyl-S-benzyl-L-cysteine sulfoxide + FMN + H2O + H(+). The enzyme catalyses N-acetyl-S-methyl-L-cysteine + FMNH2 + O2 = (R)-N-acetyl-S-methyl-L-cysteine sulfoxide + FMN + H2O + H(+). It functions in the pathway amino-acid metabolism. Its function is as follows. Involved in a cysteine salvage pathway from S-alkylcysteine. Catalyzes the oxidation of N-acetyl-S-benzyl-L-cysteine and N-acetyl-S-methyl-L-cysteine to (R)-N-acetyl-S-benzyl-L-cysteine sulfoxide and (R)-N-acetyl-S-methyl-L-cysteine sulfoxide, respectively. This pathway is likely important in the catabolism of alkylated cysteine generated by proteolysis of alkylated glutathione formed in the detoxification of a wide range of electrophiles. The polypeptide is N-acetyl-S-alkylcysteine monooxygenase (Bacillus subtilis (strain 168)).